A 716-amino-acid polypeptide reads, in one-letter code: Fatty acid oxidation complex subunit alpha (716 aa).

The interval 1–189 (MIYQSPTIQV…KVGAVDAVVA (189 aa)) is enoyl-CoA hydratase/isomerase. Residue aspartate 296 participates in substrate binding. Residues 311–716 (KDVKSAAVLG…AANNGSYYQA (406 aa)) are 3-hydroxyacyl-CoA dehydrogenase. NAD(+) is bound by residues methionine 324, aspartate 343, 400–402 (VVE), lysine 407, and serine 429. Residue histidine 450 is the For 3-hydroxyacyl-CoA dehydrogenase activity of the active site. Residue asparagine 453 coordinates NAD(+). Substrate contacts are provided by asparagine 500 and tyrosine 660.

The protein in the N-terminal section; belongs to the enoyl-CoA hydratase/isomerase family. It in the C-terminal section; belongs to the 3-hydroxyacyl-CoA dehydrogenase family. Heterotetramer of two alpha chains (FadB) and two beta chains (FadA).

It carries out the reaction a (3S)-3-hydroxyacyl-CoA + NAD(+) = a 3-oxoacyl-CoA + NADH + H(+). The catalysed reaction is a (3S)-3-hydroxyacyl-CoA = a (2E)-enoyl-CoA + H2O. It catalyses the reaction a 4-saturated-(3S)-3-hydroxyacyl-CoA = a (3E)-enoyl-CoA + H2O. The enzyme catalyses (3S)-3-hydroxybutanoyl-CoA = (3R)-3-hydroxybutanoyl-CoA. It carries out the reaction a (3Z)-enoyl-CoA = a 4-saturated (2E)-enoyl-CoA. The catalysed reaction is a (3E)-enoyl-CoA = a 4-saturated (2E)-enoyl-CoA. Its pathway is lipid metabolism; fatty acid beta-oxidation. Its function is as follows. Involved in the aerobic and anaerobic degradation of long-chain fatty acids via beta-oxidation cycle. Catalyzes the formation of 3-oxoacyl-CoA from enoyl-CoA via L-3-hydroxyacyl-CoA. It can also use D-3-hydroxyacyl-CoA and cis-3-enoyl-CoA as substrate. The protein is Fatty acid oxidation complex subunit alpha of Shewanella sp. (strain MR-7).